A 665-amino-acid chain; its full sequence is Cysteine-rich receptor-like protein kinase 41 (665 aa).

An N-terminal signal peptide occupies residues 1–27 (MTSSCSLSRPQHLFFFFFLFVPFLSLG). Residues 28-280 (QQISVDINSA…DPKPGNDKVK (253 aa)) lie on the Extracellular side of the membrane. Gnk2-homologous domains follow at residues 42-148 (PSNP…DKPI) and 154-260 (TSPV…SDLR). Residues N120, N165, and N236 are each glycosylated (N-linked (GlcNAc...) asparagine). The chain crosses the membrane as a helical span at residues 281-301 (IIIATVCSVIGFAIIAVFLYF). Residues 302–665 (FMTRNRRTAK…DVTITEFDAR (364 aa)) lie on the Cytoplasmic side of the membrane. In terms of domain architecture, Protein kinase spans 344–624 (FSRDNQLGEG…VVMLNANSFT (281 aa)). ATP-binding positions include 350-358 (LGEGGFGAV) and K372. Phosphotyrosine is present on Y417. D469 serves as the catalytic Proton acceptor. The residue at position 473 (S473) is a Phosphoserine. Residue T511 is modified to Phosphothreonine. Phosphotyrosine is present on Y519.

The protein belongs to the protein kinase superfamily. Ser/Thr protein kinase family. CRK subfamily.

It is found in the membrane. The catalysed reaction is L-seryl-[protein] + ATP = O-phospho-L-seryl-[protein] + ADP + H(+). It catalyses the reaction L-threonyl-[protein] + ATP = O-phospho-L-threonyl-[protein] + ADP + H(+). This chain is Cysteine-rich receptor-like protein kinase 41 (CRK41), found in Arabidopsis thaliana (Mouse-ear cress).